Reading from the N-terminus, the 61-residue chain is Large ribosomal subunit protein uL30 (61 aa).

It belongs to the universal ribosomal protein uL30 family. As to quaternary structure, part of the 50S ribosomal subunit.

The sequence is that of Large ribosomal subunit protein uL30 from Methylococcus capsulatus (strain ATCC 33009 / NCIMB 11132 / Bath).